The primary structure comprises 183 residues: Ribosome-recycling factor (183 aa).

A disordered region spans residues 134-156 (DANDELKKHQSEMSQDEVKGHQD).

It belongs to the RRF family.

It is found in the cytoplasm. Functionally, responsible for the release of ribosomes from messenger RNA at the termination of protein biosynthesis. May increase the efficiency of translation by recycling ribosomes from one round of translation to another. The chain is Ribosome-recycling factor from Leptospira biflexa serovar Patoc (strain Patoc 1 / Ames).